The chain runs to 284 residues: Tryptophan 2,3-dioxygenase (284 aa).

Residues 53–57, tyrosine 115, and arginine 119 contribute to the substrate site; that span reads FIVQH. Position 242 (histidine 242) interacts with heme. Residue threonine 256 participates in substrate binding.

It belongs to the tryptophan 2,3-dioxygenase family. Homotetramer. The cofactor is heme.

It carries out the reaction L-tryptophan + O2 = N-formyl-L-kynurenine. It participates in amino-acid degradation; L-tryptophan degradation via kynurenine pathway; L-kynurenine from L-tryptophan: step 1/2. Its function is as follows. Heme-dependent dioxygenase that catalyzes the oxidative cleavage of the L-tryptophan (L-Trp) pyrrole ring and converts L-tryptophan to N-formyl-L-kynurenine. Catalyzes the oxidative cleavage of the indole moiety. In Bordetella parapertussis (strain 12822 / ATCC BAA-587 / NCTC 13253), this protein is Tryptophan 2,3-dioxygenase.